A 95-amino-acid chain; its full sequence is Integration host factor subunit beta (95 aa).

The protein belongs to the bacterial histone-like protein family. In terms of assembly, heterodimer of an alpha and a beta chain.

Its function is as follows. This protein is one of the two subunits of integration host factor, a specific DNA-binding protein that functions in genetic recombination as well as in transcriptional and translational control. This is Integration host factor subunit beta from Psychromonas ingrahamii (strain DSM 17664 / CCUG 51855 / 37).